We begin with the raw amino-acid sequence, 488 residues long: UDP-glycosyltransferase 85A3 (488 aa).

UDP-alpha-D-glucose contacts are provided by residues Ser306, 363–365, 380–388, and 402–405; these read CPQ, HCGWNSTLE, and FAEQ.

Belongs to the UDP-glycosyltransferase family. In terms of tissue distribution, expressed in roots and flowers.

This is UDP-glycosyltransferase 85A3 (UGT85A3) from Arabidopsis thaliana (Mouse-ear cress).